We begin with the raw amino-acid sequence, 764 residues long: Nucleolar transcription factor 1 (764 aa).

Position 1 is an N-acetylmethionine (methionine 1). The disordered stretch occupies residues 1–21; the sequence is MNGEADCPTDLEMAAPKGQDR. 2 DNA-binding regions (HMG box) span residues 112–180 and 196–264; these read PKKP…ARFR and PEKP…RDYI. Threonine 201 carries the post-translational modification Phosphothreonine. 12 positions are modified to phosphoserine: serine 273, serine 336, serine 364, serine 389, serine 412, serine 433, serine 435, serine 484, serine 495, serine 546, serine 584, and serine 638. Residues 298–362 constitute a DNA-binding region (HMG box 3); sequence TKPPPNSYSL…DYEVELLRFL (65 aa). A disordered region spans residues 381-411; it reads NINKKQATSPASKKPAQEGGKGGSEKPKRPV. 3 DNA-binding regions (HMG box) span residues 407–475, 482–549, and 568–634; these read PKRP…GGER, PESP…SEMR, and KKPP…DLWV. The segment at 459-487 is disordered; sequence REAALKAQSERKPGGEREERGKLPESPKR. Residues 546–576 are disordered; the sequence is SEMRAPPAATNSSKKMKFQGEPKKPPMNGYQ. The disordered stretch occupies residues 648 to 764; it reads YISNKRKSMT…SGDSSDSDSN (117 aa). The segment covering 664 to 674 has biased composition (polar residues); sequence PKSSRTTLQSK. The segment covering 677–745 has biased composition (acidic residues); the sequence is SEEDDEEDED…DDDEDEDNES (69 aa). Positions 746 to 758 are enriched in low complexity; sequence EGSSSSSSSSGDS.

In terms of assembly, homodimer. Part of Pol I pre-initiation complex (PIC), in which Pol I core assembles with RRN3 and promoter-bound UTBF and SL1/TIF-IB complex. Interacts with TOP2A in the context of Pol I complex. Interacts with TBP. Interacts with TAF1A. Interacts with RASL11A. Binds to IRS1 and PIK3CA. Interacts with DHX33. Interacts with PHF6. Interacts with CEBPA (isoform 1 and isoform 4). Interacts with DDX11. Interacts with NOP53. Interacts with ALKBH2. Phosphorylated and activated by PIK3CA.

The protein localises to the nucleus. Its subcellular location is the nucleolus. In terms of biological role, recognizes the ribosomal RNA gene promoter and activates transcription mediated by RNA polymerase I (Pol I) through cooperative interactions with the transcription factor SL1/TIF-IB complex. It binds specifically to the upstream control element and can activate Pol I promoter escape. The protein is Nucleolar transcription factor 1 (UBTF) of Homo sapiens (Human).